The following is a 182-amino-acid chain: Small ribosomal subunit protein uS9 (182 aa).

This sequence belongs to the universal ribosomal protein uS9 family.

This is Small ribosomal subunit protein uS9 from Corynebacterium glutamicum (strain R).